The sequence spans 66 residues: Large ribosomal subunit protein bL35 (66 aa).

It belongs to the bacterial ribosomal protein bL35 family.

The chain is Large ribosomal subunit protein bL35 from Beijerinckia indica subsp. indica (strain ATCC 9039 / DSM 1715 / NCIMB 8712).